The chain runs to 397 residues: MSIFKLMVIYFTLFWVVNAAQLLDLDSHGVIPGAYIVVMKNGVSSHQFSSHVRWLKRAHRRNLAKRVAPFTEGLSSTWDIAGWQAYSGSFDKDTIQEILNHENVEFVEPNREMKAASTIKQENITWGLARISHMENFSHDYVSTYGEGENLTFYGIDSGIDIHQSDFTGRARWGINVADHIDIDCIGHGTHTAGTVAGQSFGILKKASIVSVKVLDCYGHGDTTKYINGLNWAINDAKKRGLLGKSVMNISLGTGRSRAVNEATVRAQEAGIFISVAAGNNAINAEFLSPGSAPELCTVAASTRNDTRAYFSNYGALIDLFAPGEYIRSTLPHNRTGIMSGTSMAAPHVCGIGGLIMAAEGLAPEQVCRRLKELANPAIKYAGFNTTDKLLYNGSGA.

A signal peptide spans 1-19 (MSIFKLMVIYFTLFWVVNA). The propeptide occupies 20–116 (AQLLDLDSHG…VEPNREMKAA (97 aa)). The region spanning 35-115 (YIVVMKNGVS…FVEPNREMKA (81 aa)) is the Inhibitor I9 domain. N-linked (GlcNAc...) asparagine glycans are attached at residues Asn-123, Asn-136, and Asn-150. The Peptidase S8 domain maps to 125 to 397 (TWGLARISHM…DKLLYNGSGA (273 aa)). Catalysis depends on charge relay system residues Asp-157 and His-188. N-linked (GlcNAc...) asparagine glycosylation is found at Asn-249, Asn-305, and Asn-334. Ser-343 (charge relay system) is an active-site residue. Residues Asn-385 and Asn-393 are each glycosylated (N-linked (GlcNAc...) asparagine).

This sequence belongs to the peptidase S8 family.

It localises to the secreted. Secreted subtilisin-like serine protease with keratinolytic activity that contributes to pathogenicity. The sequence is that of Subtilisin-like protease 12 (SUB12) from Arthroderma gypseum (strain ATCC MYA-4604 / CBS 118893) (Microsporum gypseum).